Here is a 289-residue protein sequence, read N- to C-terminus: E3 ubiquitin-protein ligase MARCHF5 (289 aa).

The RING-CH-type zinc finger occupies Val4–Val73. Zn(2+) is bound by residues Cys12, Cys15, Cys31, Cys33, His41, Cys44, Cys63, and Cys66. 4 helical membrane passes run Phe97 to Val117, Pro137 to Ile157, Leu202 to Gly222, and Thr236 to Gln256.

Its subcellular location is the mitochondrion outer membrane. It localises to the endoplasmic reticulum membrane. It carries out the reaction S-ubiquitinyl-[E2 ubiquitin-conjugating enzyme]-L-cysteine + [acceptor protein]-L-lysine = [E2 ubiquitin-conjugating enzyme]-L-cysteine + N(6)-ubiquitinyl-[acceptor protein]-L-lysine.. It participates in protein modification; protein ubiquitination. Mitochondrial E3 ubiquitin-protein ligase that plays a crucial role in the control of mitochondrial morphology by acting as a positive regulator of mitochondrial fission. May play a role in the prevention of cell senescence acting as a regulator of mitochondrial quality control. In Danio rerio (Zebrafish), this protein is E3 ubiquitin-protein ligase MARCHF5 (marchf5).